The following is a 264-amino-acid chain: MAALRMGKLTTMPTGLIYASISVHVAKEEESKKQLVKPEQLPIYTAPPLQSKYVEEQPGHLQMGFASIRTTTSRYIGWCKGVYVFVKNGIMDTVQFGKDAYVYLKNPPRDFLPKIGVITVSGLAGFISARKGSRFKRIAYPLGLATLGATVCYPVQSVIIAKVAGKKAYATSQQMYEAVKSLWTKNNKKLPEHKEKTKLGSADETETPAETTHNLKHSVPLPAELSSETKTKSTSGATQFMPDPKLMDHGQSHPEDIDMYSTRS.

The N-terminal 27 residues, 1 to 27 (MAALRMGKLTTMPTGLIYASISVHVAK), are a transit peptide targeting the mitochondrion. Residues 28-110 (EEESKKQLVK…YVYLKNPPRD (83 aa)) are Mitochondrial intermembrane-facing. A helical transmembrane segment spans residues 111-129 (FLPKIGVITVSGLAGFISA). The Mitochondrial matrix segment spans residues 130–137 (RKGSRFKR). Residues 138–155 (IAYPLGLATLGATVCYPV) form a helical membrane-spanning segment. Topologically, residues 156–264 (QSVIIAKVAG…EDIDMYSTRS (109 aa)) are mitochondrial intermembrane. Basic and acidic residues predominate over residues 189-198 (KLPEHKEKTK). The interval 189 to 264 (KLPEHKEKTK…EDIDMYSTRS (76 aa)) is disordered. Positions 223–238 (AELSSETKTKSTSGAT) are enriched in low complexity. Residues 245–256 (KLMDHGQSHPED) are compositionally biased toward basic and acidic residues.

This sequence belongs to the apolipoprotein O/MICOS complex subunit Mic27 family. As to quaternary structure, component of the mitochondrial contact site and cristae organizing system (MICOS) complex, composed of at least MICOS10/MIC10, CHCHD3/MIC19, CHCHD6/MIC25, APOOL/MIC27, IMMT/MIC60, APOO/MIC23/MIC26 and QIL1/MIC13. This complex was also known under the names MINOS or MitOS complex. The MICOS complex associates with mitochondrial outer membrane proteins SAMM50, MTX1 and MTX2 (together described as components of the mitochondrial outer membrane sorting assembly machinery (SAM) complex) and DNAJC11, mitochondrial inner membrane protein TMEM11 and with HSPA9. The MICOS and SAM complexes together with DNAJC11 are part of a large protein complex spanning both membranes termed the mitochondrial intermembrane space bridging (MIB) complex. Interacts with MICOS10/MIC10, IMMT/MIC60 and APOO/MIC23/MIC26.

The protein localises to the mitochondrion inner membrane. It is found in the mitochondrion. Functionally, component of the MICOS complex, a large protein complex of the mitochondrial inner membrane that plays crucial roles in the maintenance of crista junctions, inner membrane architecture, and formation of contact sites to the outer membrane. Specifically binds to cardiolipin (in vitro) but not to the precursor lipid phosphatidylglycerol. Plays a crucial role in crista junction formation and mitochondrial function. The polypeptide is MICOS complex subunit MIC27 (APOL) (Bos taurus (Bovine)).